Consider the following 436-residue polypeptide: 3-ketoacyl-CoA thiolase (436 aa).

The active-site Acyl-thioester intermediate is the Cys99. Catalysis depends on proton acceptor residues His392 and Cys422.

The protein belongs to the thiolase-like superfamily. Thiolase family. In terms of assembly, heterotetramer of two alpha chains (FadJ) and two beta chains (FadI).

It is found in the cytoplasm. It carries out the reaction an acyl-CoA + acetyl-CoA = a 3-oxoacyl-CoA + CoA. It participates in lipid metabolism; fatty acid beta-oxidation. Catalyzes the final step of fatty acid oxidation in which acetyl-CoA is released and the CoA ester of a fatty acid two carbons shorter is formed. In Shewanella sediminis (strain HAW-EB3), this protein is 3-ketoacyl-CoA thiolase.